We begin with the raw amino-acid sequence, 208 residues long: Large ribosomal subunit protein bL25 (208 aa).

The protein belongs to the bacterial ribosomal protein bL25 family. CTC subfamily. Part of the 50S ribosomal subunit; part of the 5S rRNA/L5/L18/L25 subcomplex. Contacts the 5S rRNA. Binds to the 5S rRNA independently of L5 and L18.

This is one of the proteins that binds to the 5S RNA in the ribosome where it forms part of the central protuberance. The chain is Large ribosomal subunit protein bL25 from Phenylobacterium zucineum (strain HLK1).